Reading from the N-terminus, the 541-residue chain is Chaperonin GroEL 1 (541 aa).

ATP is bound by residues 30–33 (TLGP), 87–91 (DGTTT), Gly414, 478–480 (NAA), and Asp494.

It belongs to the chaperonin (HSP60) family. As to quaternary structure, forms a cylinder of 14 subunits composed of two heptameric rings stacked back-to-back. Interacts with the co-chaperonin GroES.

Its subcellular location is the cytoplasm. It carries out the reaction ATP + H2O + a folded polypeptide = ADP + phosphate + an unfolded polypeptide.. Functionally, together with its co-chaperonin GroES, plays an essential role in assisting protein folding. The GroEL-GroES system forms a nano-cage that allows encapsulation of the non-native substrate proteins and provides a physical environment optimized to promote and accelerate protein folding. The polypeptide is Chaperonin GroEL 1 (Thermobifida fusca (strain YX)).